We begin with the raw amino-acid sequence, 140 residues long: MEGRLPYDDFPVVFLPPYESPPAWVPPHERVYHPDYNNELTQFLPRTVVLKKPPGAQLGFNIRGGKASQLGIFISKVIPDSDAHRAGLQEGDQVLSVNDVDFQDIEHSKAVEILKTAREITMRVRYFPYSKCLLAPNLVT.

Residues 47–129 enclose the PDZ domain; the sequence is TVVLKKPPGA…ITMRVRYFPY (83 aa).

It localises to the cytoplasm. The protein is PDZ domain-containing protein 11 (PDZD11) of Gallus gallus (Chicken).